The sequence spans 98 residues: Aspartyl/glutamyl-tRNA(Asn/Gln) amidotransferase subunit C (98 aa).

Belongs to the GatC family. As to quaternary structure, heterotrimer of A, B and C subunits.

The enzyme catalyses L-glutamyl-tRNA(Gln) + L-glutamine + ATP + H2O = L-glutaminyl-tRNA(Gln) + L-glutamate + ADP + phosphate + H(+). The catalysed reaction is L-aspartyl-tRNA(Asn) + L-glutamine + ATP + H2O = L-asparaginyl-tRNA(Asn) + L-glutamate + ADP + phosphate + 2 H(+). Allows the formation of correctly charged Asn-tRNA(Asn) or Gln-tRNA(Gln) through the transamidation of misacylated Asp-tRNA(Asn) or Glu-tRNA(Gln) in organisms which lack either or both of asparaginyl-tRNA or glutaminyl-tRNA synthetases. The reaction takes place in the presence of glutamine and ATP through an activated phospho-Asp-tRNA(Asn) or phospho-Glu-tRNA(Gln). This Mycobacterium avium (strain 104) protein is Aspartyl/glutamyl-tRNA(Asn/Gln) amidotransferase subunit C.